The following is a 373-amino-acid chain: MKLLSVLALSATATSVLGASIPVDTRAQKFLIELAPGETRWVTEEEKWELKQKGQDFFDITDEEVGFTAAVAQPAIAYPTSIRHADAVNAMIATLSKENMQRDLTKLSSFHNRYYKSDYGKQSATWLQQQVQAVINSSGASRYGAKVVSVRHNFVQHSIVATIPGRSPEIVVVGAHQDSINQRSPMTGRAPGADDNGSGSVTILEALRGVLQDQTIVQGKAANTIEFHWYAGEEAGLLGSQAIFANYKQTGKKVKGMLNQDMTGYIKGMVDRGLKVSFGIITDNVSTSLTSFIRMVITKYCSIPTIDTRCGYACSDHASANRNGYPSAMVAESPINLLDPHLHTDSDLISYLDFDHMIEHAKLVVGFVTELAK.

The first 18 residues, 1-18 (MKLLSVLALSATATSVLG), serve as a signal peptide directing secretion. A glycan (N-linked (GlcNAc...) asparagine) is linked at N136. Zn(2+)-binding residues include H176 and D195. An N-linked (GlcNAc...) asparagine glycan is attached at N196. Positions 234 and 261 each coordinate Zn(2+). N284 carries N-linked (GlcNAc...) asparagine glycosylation. C310 and C314 are oxidised to a cystine. H343 is a binding site for Zn(2+).

It belongs to the peptidase M28 family. M28E subfamily. As to quaternary structure, monomer. Requires Zn(2+) as cofactor.

The protein localises to the secreted. Functionally, extracellular aminopeptidase which contributes to pathogenicity. The protein is Leucine aminopeptidase 1 (LAP1) of Trichophyton equinum (Horse ringworm fungus).